A 312-amino-acid chain; its full sequence is D-alanine--D-alanine ligase (312 aa).

An ATP-grasp domain is found at 108 to 308 (KLVWQQTGIP…YSELVVKVLS (201 aa)). 138–193 (AAKLGVPLFVKPASEGSSVAVEKVKSADALPAALEEAAKHDKIVIVEKSIEGGGEY) contributes to the ATP binding site. 3 residues coordinate Mg(2+): Asp-262, Glu-275, and Asn-277.

Belongs to the D-alanine--D-alanine ligase family. Mg(2+) is required as a cofactor. The cofactor is Mn(2+).

The protein localises to the cytoplasm. It carries out the reaction 2 D-alanine + ATP = D-alanyl-D-alanine + ADP + phosphate + H(+). Its pathway is cell wall biogenesis; peptidoglycan biosynthesis. In terms of biological role, cell wall formation. The polypeptide is D-alanine--D-alanine ligase (Burkholderia pseudomallei (strain 668)).